Consider the following 135-residue polypeptide: UPF0102 protein Aave_0630 (135 aa).

Residues 1–21 form a disordered region; sequence MGILEKKTAGPGGAARKTTTR.

This sequence belongs to the UPF0102 family.

The polypeptide is UPF0102 protein Aave_0630 (Paracidovorax citrulli (strain AAC00-1) (Acidovorax citrulli)).